Consider the following 90-residue polypeptide: Barstar (90 aa).

The protein belongs to the barstar family.

Its subcellular location is the cytoplasm. Its function is as follows. Inhibitor of the ribonuclease barnase. Forms a one-to-one non-covalent complex. The sequence is that of Barstar from Bacillus amyloliquefaciens (Bacillus velezensis).